The following is a 422-amino-acid chain: Glutamate-1-semialdehyde 2,1-aminomutase (422 aa).

An N6-(pyridoxal phosphate)lysine modification is found at Lys-258.

Belongs to the class-III pyridoxal-phosphate-dependent aminotransferase family. HemL subfamily. As to quaternary structure, homodimer. The cofactor is pyridoxal 5'-phosphate.

It localises to the cytoplasm. The enzyme catalyses (S)-4-amino-5-oxopentanoate = 5-aminolevulinate. The protein operates within porphyrin-containing compound metabolism; protoporphyrin-IX biosynthesis; 5-aminolevulinate from L-glutamyl-tRNA(Glu): step 2/2. The chain is Glutamate-1-semialdehyde 2,1-aminomutase from Chlamydia muridarum (strain MoPn / Nigg).